The following is a 499-amino-acid chain: MFSRRNLVALGLAATVSAGPCDIYEAGDTPCVAAHSTTRALYSSFSGALYQLQRGSDDTTTTISPLTAGGVADASAQDTFCANTTCLITIIYDQSGNGNHLTQAPPGGFDGPDVDGYDNLASAIGAPVTLNGQKAYGVFMSPGTGYRNNEATGTATGDEPEGMYAVLDGTHYNDACCFDYGNAETSSTDTGAGHMEAIYLGNSTTWGYGAGDGPWIMVDMENNLFSGADEGYNSGDPSISYSFVTAAVKGGADKWAIRGGNAASGSLSTYYSGARPDYSGYNPMSKEGAIILGIGGDNSNGAQGTFYEGVMTSGYPSDDVENSVQENIVAAKYVSGSLVSGPSFTSGEVVSLRVTTPGYTTRYIAHTDTTVNTQVVDDDSSTTLKEEASWTVVTGLANSQCFSFESVDTPGSYIRHYNFELLLNANDGTKQFHEDATFCPQAPLNGEGTSLRSWSYPTRYFRHYDNVLYAASNGGVQTFDSKTSFNNDVSFEIETAFAS.

The N-terminal stretch at 1 to 18 (MFSRRNLVALGLAATVSA) is a signal peptide. The interval 19 to 335 (GPCDIYEAGD…ENIVAAKYVS (317 aa)) is catalytic. Disulfide bonds link C21–C31, C81–C86, and C176–C177. N83 carries N-linked (GlcNAc...) asparagine glycosylation. The N-linked (GlcNAc...) asparagine glycan is linked to N202. D219 contacts substrate. Catalysis depends on E221, which acts as the Nucleophile. Substrate is bound by residues N222, N223, and G296. D297 functions as the Proton donor in the catalytic mechanism. Residues 336–499 (GSLVSGPSFT…SFEIETAFAS (164 aa)) are ABD. C401 and C439 are disulfide-bonded. The substrate site is built by H416, N418, F419, D435, H463, D465, L468, and D488.

Belongs to the glycosyl hydrolase 54 family.

It localises to the secreted. The catalysed reaction is Hydrolysis of terminal non-reducing alpha-L-arabinofuranoside residues in alpha-L-arabinosides.. The protein operates within glycan metabolism; L-arabinan degradation. Its function is as follows. Alpha-L-arabinofuranosidase involved in the degradation of arabinoxylan, a major component of plant hemicellulose. Able to hydrolyze 1,5-, 1,3- and 1,2-alpha-linkages not only in L-arabinofuranosyl oligosaccharides, but also in polysaccharides containing terminal non-reducing L-arabinofuranoses in side chains, like L-arabinan, arabinogalactan and arabinoxylan. In Aspergillus niger (strain ATCC MYA-4892 / CBS 513.88 / FGSC A1513), this protein is Probable alpha-L-arabinofuranosidase B (abfB).